A 155-amino-acid polypeptide reads, in one-letter code: Transcriptional regulator MraZ (155 aa).

SpoVT-AbrB domains are found at residues 5–52 and 81–124; these read TYEN…SQDR and SMNL…EPAA.

The protein belongs to the MraZ family. As to quaternary structure, forms oligomers.

The protein localises to the cytoplasm. It is found in the nucleoid. This is Transcriptional regulator MraZ from Pelagibacter ubique (strain HTCC1062).